The sequence spans 350 residues: Biotin synthase (350 aa).

The Radical SAM core domain maps to 38-256 (NHVQVSTLLS…IAVARIMMPE (219 aa)). Residues cysteine 53, cysteine 57, and cysteine 60 each contribute to the [4Fe-4S] cluster site. [2Fe-2S] cluster contacts are provided by cysteine 97, cysteine 128, cysteine 188, and arginine 260.

It belongs to the radical SAM superfamily. Biotin synthase family. As to quaternary structure, homodimer. It depends on [4Fe-4S] cluster as a cofactor. [2Fe-2S] cluster is required as a cofactor.

The catalysed reaction is (4R,5S)-dethiobiotin + (sulfur carrier)-SH + 2 reduced [2Fe-2S]-[ferredoxin] + 2 S-adenosyl-L-methionine = (sulfur carrier)-H + biotin + 2 5'-deoxyadenosine + 2 L-methionine + 2 oxidized [2Fe-2S]-[ferredoxin]. The protein operates within cofactor biosynthesis; biotin biosynthesis; biotin from 7,8-diaminononanoate: step 2/2. Its function is as follows. Catalyzes the conversion of dethiobiotin (DTB) to biotin by the insertion of a sulfur atom into dethiobiotin via a radical-based mechanism. This chain is Biotin synthase, found in Aliivibrio fischeri (strain MJ11) (Vibrio fischeri).